The sequence spans 210 residues: MRVPAAVTGGCGCGVDGGGGCCRGGGKLADWEEGKDDEMKSVVVKGWTRMAQVVPLHDNASAEDDDDDEEDDDEDDDDDDDEDDEEEAAPPYVMAVDDSSVDRAVITALLRRSKYRVTAVDSGKRALEILGSEPNVSMIITDYWMPEMTGYDLLKKIKESSELKQIPVVIMSSENVPTRISRCLEEGAEDFLLKPVRPADISRITSRMLQ.

The segment at 53-92 is disordered; that stretch reads VVPLHDNASAEDDDDDEEDDDEDDDDDDDEDDEEEAAPPY. Over residues 61-88 the composition is skewed to acidic residues; that stretch reads SAEDDDDDEEDDDEDDDDDDDEDDEEEA. One can recognise a Response regulatory domain in the interval 92–205; it reads YVMAVDDSSV…VRPADISRIT (114 aa). A 4-aspartylphosphate modification is found at aspartate 142.

This sequence belongs to the ARR family. Type-A subfamily. In terms of processing, two-component system major event consists of a His-to-Asp phosphorelay between a sensor histidine kinase (HK) and a response regulator (RR). In plants, the His-to-Asp phosphorelay involves an additional intermediate named Histidine-containing phosphotransfer protein (HPt). This multistep phosphorelay consists of a His-Asp-His-Asp sequential transfer of a phosphate group between first a His and an Asp of the HK protein, followed by the transfer to a conserved His of the HPt protein and finally the transfer to an Asp in the receiver domain of the RR protein.

Functionally, functions as a response regulator involved in His-to-Asp phosphorelay signal transduction system. Phosphorylation of the Asp residue in the receiver domain activates the ability of the protein to promote the transcription of target genes. Type-A response regulators seem to act as negative regulators of the cytokinin signaling. This Oryza sativa subsp. japonica (Rice) protein is Two-component response regulator ORR7.